The chain runs to 185 residues: Ribosome-recycling factor (185 aa).

This sequence belongs to the RRF family.

Its subcellular location is the cytoplasm. In terms of biological role, responsible for the release of ribosomes from messenger RNA at the termination of protein biosynthesis. May increase the efficiency of translation by recycling ribosomes from one round of translation to another. This is Ribosome-recycling factor from Ectopseudomonas mendocina (strain ymp) (Pseudomonas mendocina).